The primary structure comprises 433 residues: GTPase Obg (433 aa).

Residues 1-159 form the Obg domain; the sequence is MAFRDVLDIE…RRVRLELRLI (159 aa). In terms of domain architecture, OBG-type G spans 160 to 327; sequence ADVGLVGYPN…LRQALFDLLP (168 aa). Residues 166 to 173, 191 to 195, 214 to 217, 280 to 283, and 308 to 310 contribute to the ATP site; these read GYPNAGKS, FTTLS, DIPG, NKIE, and SAK. Mg(2+) is bound by residues Ser173 and Thr193. In terms of domain architecture, OCT spans 342–430; it reads PEEVREEPLT…IGSFRFEYYA (89 aa).

It belongs to the TRAFAC class OBG-HflX-like GTPase superfamily. OBG GTPase family. In terms of assembly, monomer. Mg(2+) is required as a cofactor.

The protein localises to the cytoplasm. Functionally, an essential GTPase which binds GTP, GDP and possibly (p)ppGpp with moderate affinity, with high nucleotide exchange rates and a fairly low GTP hydrolysis rate. Plays a role in control of the cell cycle, stress response, ribosome biogenesis and in those bacteria that undergo differentiation, in morphogenesis control. This Deinococcus geothermalis (strain DSM 11300 / CIP 105573 / AG-3a) protein is GTPase Obg.